The chain runs to 345 residues: Phenylalanine--tRNA ligase alpha subunit (345 aa).

Glu253 lines the Mg(2+) pocket.

The protein belongs to the class-II aminoacyl-tRNA synthetase family. Phe-tRNA synthetase alpha subunit type 1 subfamily. As to quaternary structure, tetramer of two alpha and two beta subunits. Mg(2+) serves as cofactor.

It localises to the cytoplasm. The enzyme catalyses tRNA(Phe) + L-phenylalanine + ATP = L-phenylalanyl-tRNA(Phe) + AMP + diphosphate + H(+). The chain is Phenylalanine--tRNA ligase alpha subunit from Lawsonia intracellularis (strain PHE/MN1-00).